The following is a 779-amino-acid chain: Glutathione biosynthesis bifunctional protein GshAB (779 aa).

Positions Met1–Ala346 are glutamate--cysteine ligase. In terms of domain architecture, ATP-grasp spans Lys512–Gly768. Pro539–Arg597 contributes to the ATP binding site. Positions 719, 738, and 740 each coordinate Mg(2+). Positions 719, 738, and 740 each coordinate Mn(2+).

In the N-terminal section; belongs to the glutamate--cysteine ligase type 1 family. Type 2 subfamily. As to quaternary structure, monomer. Requires Mg(2+) as cofactor. The cofactor is Mn(2+).

The enzyme catalyses L-cysteine + L-glutamate + ATP = gamma-L-glutamyl-L-cysteine + ADP + phosphate + H(+). It carries out the reaction gamma-L-glutamyl-L-cysteine + glycine + ATP = glutathione + ADP + phosphate + H(+). It functions in the pathway sulfur metabolism; glutathione biosynthesis; glutathione from L-cysteine and L-glutamate: step 1/2. The protein operates within sulfur metabolism; glutathione biosynthesis; glutathione from L-cysteine and L-glutamate: step 2/2. Functionally, synthesizes glutathione from L-glutamate and L-cysteine via gamma-L-glutamyl-L-cysteine. The sequence is that of Glutathione biosynthesis bifunctional protein GshAB from Desulfotalea psychrophila (strain LSv54 / DSM 12343).